The primary structure comprises 37 residues: MVEALLSGIVPGLIPITLAGSFVIAYLQYRRGDQLDL.

The chain crosses the membrane as a helical span at residues 5-25; it reads LLSGIVPGLIPITLAGSFVIA.

The protein belongs to the PetG family. The 4 large subunits of the cytochrome b6-f complex are cytochrome b6, subunit IV (17 kDa polypeptide, PetD), cytochrome f and the Rieske protein, while the 4 small subunits are PetG, PetL, PetM and PetN. The complex functions as a dimer.

The protein localises to the plastid membrane. Its function is as follows. Component of the cytochrome b6-f complex, which mediates electron transfer between photosystem II (PSII) and photosystem I (PSI), cyclic electron flow around PSI, and state transitions. PetG is required for either the stability or assembly of the cytochrome b6-f complex. This chain is Cytochrome b6-f complex subunit 5, found in Aneura mirabilis (Parasitic liverwort).